A 736-amino-acid polypeptide reads, in one-letter code: Elongation factor 2 (736 aa).

Residues 18–262 form the tr-type G domain; it reads TRVRNIGIIA…AVIKFVPNPV (245 aa). GTP contacts are provided by residues 27 to 34, 93 to 97, and 147 to 150; these read AHVDHGKT, DTPGH, and NKVD. Histidine 603 bears the Diphthamide mark.

The protein belongs to the TRAFAC class translation factor GTPase superfamily. Classic translation factor GTPase family. EF-G/EF-2 subfamily.

The protein localises to the cytoplasm. Its function is as follows. Catalyzes the GTP-dependent ribosomal translocation step during translation elongation. During this step, the ribosome changes from the pre-translocational (PRE) to the post-translocational (POST) state as the newly formed A-site-bound peptidyl-tRNA and P-site-bound deacylated tRNA move to the P and E sites, respectively. Catalyzes the coordinated movement of the two tRNA molecules, the mRNA and conformational changes in the ribosome. The chain is Elongation factor 2 from Metallosphaera sedula (strain ATCC 51363 / DSM 5348 / JCM 9185 / NBRC 15509 / TH2).